The sequence spans 254 residues: Imidazole glycerol phosphate synthase subunit HisF (254 aa).

Active-site residues include aspartate 12 and aspartate 131.

The protein belongs to the HisA/HisF family. As to quaternary structure, heterodimer of HisH and HisF.

It localises to the cytoplasm. The enzyme catalyses 5-[(5-phospho-1-deoxy-D-ribulos-1-ylimino)methylamino]-1-(5-phospho-beta-D-ribosyl)imidazole-4-carboxamide + L-glutamine = D-erythro-1-(imidazol-4-yl)glycerol 3-phosphate + 5-amino-1-(5-phospho-beta-D-ribosyl)imidazole-4-carboxamide + L-glutamate + H(+). Its pathway is amino-acid biosynthesis; L-histidine biosynthesis; L-histidine from 5-phospho-alpha-D-ribose 1-diphosphate: step 5/9. In terms of biological role, IGPS catalyzes the conversion of PRFAR and glutamine to IGP, AICAR and glutamate. The HisF subunit catalyzes the cyclization activity that produces IGP and AICAR from PRFAR using the ammonia provided by the HisH subunit. This Frankia casuarinae (strain DSM 45818 / CECT 9043 / HFP020203 / CcI3) protein is Imidazole glycerol phosphate synthase subunit HisF.